We begin with the raw amino-acid sequence, 328 residues long: Phosphate acyltransferase (328 aa).

This sequence belongs to the PlsX family. Homodimer. Probably interacts with PlsY.

The protein resides in the cytoplasm. The enzyme catalyses a fatty acyl-[ACP] + phosphate = an acyl phosphate + holo-[ACP]. It participates in lipid metabolism; phospholipid metabolism. Functionally, catalyzes the reversible formation of acyl-phosphate (acyl-PO(4)) from acyl-[acyl-carrier-protein] (acyl-ACP). This enzyme utilizes acyl-ACP as fatty acyl donor, but not acyl-CoA. The polypeptide is Phosphate acyltransferase (Staphylococcus aureus (strain MRSA252)).